The sequence spans 180 residues: Acireductone dioxygenase (180 aa).

Fe(2+) is bound by residues His97, His99, Glu103, and His141. Ni(2+) is bound by residues His97, His99, Glu103, and His141.

It belongs to the acireductone dioxygenase (ARD) family. As to quaternary structure, monomer. Fe(2+) is required as a cofactor. Requires Ni(2+) as cofactor.

The enzyme catalyses 1,2-dihydroxy-5-(methylsulfanyl)pent-1-en-3-one + O2 = 3-(methylsulfanyl)propanoate + CO + formate + 2 H(+). It catalyses the reaction 1,2-dihydroxy-5-(methylsulfanyl)pent-1-en-3-one + O2 = 4-methylsulfanyl-2-oxobutanoate + formate + 2 H(+). The protein operates within amino-acid biosynthesis; L-methionine biosynthesis via salvage pathway; L-methionine from S-methyl-5-thio-alpha-D-ribose 1-phosphate: step 5/6. In terms of biological role, catalyzes 2 different reactions between oxygen and the acireductone 1,2-dihydroxy-3-keto-5-methylthiopentene (DHK-MTPene) depending upon the metal bound in the active site. Fe-containing acireductone dioxygenase (Fe-ARD) produces formate and 2-keto-4-methylthiobutyrate (KMTB), the alpha-ketoacid precursor of methionine in the methionine recycle pathway. Ni-containing acireductone dioxygenase (Ni-ARD) produces methylthiopropionate, carbon monoxide and formate, and does not lie on the methionine recycle pathway. The protein is Acireductone dioxygenase of Citrobacter koseri (strain ATCC BAA-895 / CDC 4225-83 / SGSC4696).